Consider the following 336-residue polypeptide: Ornithine carbamoyltransferase, catabolic (336 aa).

Residues Ser-62–Thr-65, Gln-89, Arg-113, and His-140–Gln-143 each bind carbamoyl phosphate. L-ornithine is bound by residues Asn-172, Asp-236, and Ser-240–Met-241. Carbamoyl phosphate contacts are provided by residues Cys-277–Leu-278 and Arg-322.

The protein belongs to the aspartate/ornithine carbamoyltransferase superfamily. OTCase family.

The protein resides in the cytoplasm. It carries out the reaction carbamoyl phosphate + L-ornithine = L-citrulline + phosphate + H(+). It participates in amino-acid degradation; L-arginine degradation via ADI pathway; carbamoyl phosphate from L-arginine: step 2/2. In terms of biological role, reversibly catalyzes the transfer of the carbamoyl group from carbamoyl phosphate (CP) to the N(epsilon) atom of ornithine (ORN) to produce L-citrulline. The sequence is that of Ornithine carbamoyltransferase, catabolic from Staphylococcus aureus (strain MSSA476).